We begin with the raw amino-acid sequence, 183 residues long: Ferritin light chain 1 (183 aa).

The Ferritin-like diiron domain maps to 7-156 (QNYSTEVEAA…NHLTNLRRVA (150 aa)). Positions 54, 57, 58, 61, and 64 each coordinate Fe cation.

It belongs to the ferritin family. In terms of assembly, oligomer of 24 subunits. There are two types of subunits: L (light) chain and H (heavy) chain. The major chain can be light or heavy, depending on the species and tissue type. The functional molecule forms a roughly spherical shell with a diameter of 12 nm and contains a central cavity into which the insoluble mineral iron core is deposited. Interacts with NCOA4. As to expression, in rat liver, the light chain is the major chain.

The protein resides in the cytoplasmic vesicle. It localises to the autophagosome. Its subcellular location is the cytoplasm. It is found in the autolysosome. In terms of biological role, stores iron in a soluble, non-toxic, readily available form. Important for iron homeostasis. Iron is taken up in the ferrous form and deposited as ferric hydroxides after oxidation. Also plays a role in delivery of iron to cells. Mediates iron uptake in capsule cells of the developing kidney. Delivery to lysosomes by the cargo receptor NCOA4 for autophagic degradation and release or iron. In Rattus norvegicus (Rat), this protein is Ferritin light chain 1 (Ftl1).